The following is a 228-amino-acid chain: Imidazole glycerol phosphate synthase subunit HisH (228 aa).

Residues Asp4–Ser218 enclose the Glutamine amidotransferase type-1 domain. Cys83 (nucleophile) is an active-site residue. Residues His193 and Glu195 contribute to the active site.

In terms of assembly, heterodimer of HisH and HisF.

Its subcellular location is the cytoplasm. It carries out the reaction 5-[(5-phospho-1-deoxy-D-ribulos-1-ylimino)methylamino]-1-(5-phospho-beta-D-ribosyl)imidazole-4-carboxamide + L-glutamine = D-erythro-1-(imidazol-4-yl)glycerol 3-phosphate + 5-amino-1-(5-phospho-beta-D-ribosyl)imidazole-4-carboxamide + L-glutamate + H(+). The enzyme catalyses L-glutamine + H2O = L-glutamate + NH4(+). The protein operates within amino-acid biosynthesis; L-histidine biosynthesis; L-histidine from 5-phospho-alpha-D-ribose 1-diphosphate: step 5/9. IGPS catalyzes the conversion of PRFAR and glutamine to IGP, AICAR and glutamate. The HisH subunit catalyzes the hydrolysis of glutamine to glutamate and ammonia as part of the synthesis of IGP and AICAR. The resulting ammonia molecule is channeled to the active site of HisF. The chain is Imidazole glycerol phosphate synthase subunit HisH from Thiobacillus denitrificans (strain ATCC 25259 / T1).